A 132-amino-acid polypeptide reads, in one-letter code: MVMTDPIADFLTRIRNGNMRKFDVVEAPASKIKRQIAEILKAEGYVKDVEYVEDNKQGVIRVFLKYGKNGEKVITNLKRISKPGLRVYVKSDDIPKVLNGLGTAIISTSTGVVTDKVARETNVGGEVIAYIW.

The protein belongs to the universal ribosomal protein uS8 family. As to quaternary structure, part of the 30S ribosomal subunit. Contacts proteins S5 and S12.

Its function is as follows. One of the primary rRNA binding proteins, it binds directly to 16S rRNA central domain where it helps coordinate assembly of the platform of the 30S subunit. The protein is Small ribosomal subunit protein uS8 of Lactococcus lactis subsp. lactis (strain IL1403) (Streptococcus lactis).